The chain runs to 538 residues: Probable bifunctional riboflavin biosynthesis protein RIBA 1, chloroplastic (538 aa).

The segment covering 1 to 16 (MSRLSSIYSQHRTSGL) has biased composition (polar residues). Positions 1–29 (MSRLSSIYSQHRTSGLRSDRSIMPNSTSN) are disordered. A chloroplast-targeting transit peptide spans 1–73 (MSRLSSIYSQ…NGQASPSKVV (73 aa)). Positions 46–311 (RNFHISHAVG…IADLIRYRRK (266 aa)) are DHBP synthase. Residues 134-135 (RE), Asp-139, 249-253 (RAGHT), and Glu-273 contribute to the D-ribulose 5-phosphate site. Glu-135 contributes to the Mg(2+) binding site. His-252 provides a ligand contact to Mg(2+). The segment at 312–530 (RDRLVERVCV…DGGIKKEQDQ (219 aa)) is GTP cyclohydrolase II. 362 to 366 (RVHSE) lines the GTP pocket. The Zn(2+) site is built by Cys-367, Cys-378, and Cys-380. GTP-binding positions include Gln-383, 406–408 (EGR), and Thr-428. Residue Asp-440 is the Proton acceptor; for GTP cyclohydrolase activity of the active site. The active-site Nucleophile; for GTP cyclohydrolase activity is Arg-442. Residues Thr-463 and Lys-468 each contribute to the GTP site. Positions 506–538 (HVYGTRPSGNTSTLADGGIKKEQDQIDSASEQE) are disordered.

In the N-terminal section; belongs to the DHBP synthase family. The protein in the C-terminal section; belongs to the GTP cyclohydrolase II family. The cofactor is Mg(2+). It depends on Mn(2+) as a cofactor. Zn(2+) is required as a cofactor.

It localises to the plastid. The protein resides in the chloroplast. The enzyme catalyses D-ribulose 5-phosphate = (2S)-2-hydroxy-3-oxobutyl phosphate + formate + H(+). It carries out the reaction GTP + 4 H2O = 2,5-diamino-6-hydroxy-4-(5-phosphoribosylamino)-pyrimidine + formate + 2 phosphate + 3 H(+). The protein operates within cofactor biosynthesis; riboflavin biosynthesis; 2-hydroxy-3-oxobutyl phosphate from D-ribulose 5-phosphate: step 1/1. It participates in cofactor biosynthesis; riboflavin biosynthesis; 5-amino-6-(D-ribitylamino)uracil from GTP: step 1/4. Involved in riboflavin biosynthesis. Catalyzes both the conversion of D-ribulose 5-phosphate to formate and 3,4-dihydroxy-2-butanone 4-phosphate and the conversion of GTP to 2,5-diamino-6-ribosylamino-4(3H)-pyrimidinone 5'-phosphate (DARP), formate and pyrophosphate. This chain is Probable bifunctional riboflavin biosynthesis protein RIBA 1, chloroplastic (RIBA1), found in Oryza sativa subsp. japonica (Rice).